Reading from the N-terminus, the 95-residue chain is Integration host factor subunit beta (95 aa).

The protein belongs to the bacterial histone-like protein family. As to quaternary structure, heterodimer of an alpha and a beta chain.

In terms of biological role, this protein is one of the two subunits of integration host factor, a specific DNA-binding protein that functions in genetic recombination as well as in transcriptional and translational control. This chain is Integration host factor subunit beta, found in Shewanella sp. (strain ANA-3).